Here is a 224-residue protein sequence, read N- to C-terminus: Phosphoribosylformylglycinamidine synthase subunit PurQ (224 aa).

One can recognise a Glutamine amidotransferase type-1 domain in the interval 2–224 (KFAVIVFPGS…IVDNFVKGGV (223 aa)). Catalysis depends on Cys-86, which acts as the Nucleophile. Residues His-194 and Glu-196 contribute to the active site.

In terms of assembly, part of the FGAM synthase complex composed of 1 PurL, 1 PurQ and 2 PurS subunits.

It localises to the cytoplasm. The catalysed reaction is N(2)-formyl-N(1)-(5-phospho-beta-D-ribosyl)glycinamide + L-glutamine + ATP + H2O = 2-formamido-N(1)-(5-O-phospho-beta-D-ribosyl)acetamidine + L-glutamate + ADP + phosphate + H(+). The enzyme catalyses L-glutamine + H2O = L-glutamate + NH4(+). It functions in the pathway purine metabolism; IMP biosynthesis via de novo pathway; 5-amino-1-(5-phospho-D-ribosyl)imidazole from N(2)-formyl-N(1)-(5-phospho-D-ribosyl)glycinamide: step 1/2. Its function is as follows. Part of the phosphoribosylformylglycinamidine synthase complex involved in the purines biosynthetic pathway. Catalyzes the ATP-dependent conversion of formylglycinamide ribonucleotide (FGAR) and glutamine to yield formylglycinamidine ribonucleotide (FGAM) and glutamate. The FGAM synthase complex is composed of three subunits. PurQ produces an ammonia molecule by converting glutamine to glutamate. PurL transfers the ammonia molecule to FGAR to form FGAM in an ATP-dependent manner. PurS interacts with PurQ and PurL and is thought to assist in the transfer of the ammonia molecule from PurQ to PurL. The polypeptide is Phosphoribosylformylglycinamidine synthase subunit PurQ (Caldanaerobacter subterraneus subsp. tengcongensis (strain DSM 15242 / JCM 11007 / NBRC 100824 / MB4) (Thermoanaerobacter tengcongensis)).